The chain runs to 365 residues: Tubulin-like protein CetZ (365 aa).

Residues 10 to 14, 103 to 105, Glu136, Asn163, and Asn181 each bind GTP; these read QCGTK and GTG.

It belongs to the CetZ family.

It is found in the cytoplasm. Involved in cell shape control. This chain is Tubulin-like protein CetZ, found in Pyrococcus horikoshii (strain ATCC 700860 / DSM 12428 / JCM 9974 / NBRC 100139 / OT-3).